Here is an 84-residue protein sequence, read N- to C-terminus: MALSIKHPEADRLARALAARTGETLTEAVVTALRERLARETGRARVVPLRDELAAIRHRCAALPVVDNRSAEAILGYDERGLPA.

In terms of biological role, antitoxin component of a type II toxin-antitoxin (TA) system. Upon expression in M.smegmatis neutralizes the effect of cognate toxin VapC30. This chain is Antitoxin VapB30 (vapB30), found in Mycobacterium tuberculosis (strain ATCC 25618 / H37Rv).